The following is a 155-amino-acid chain: SsrA-binding protein (155 aa).

It belongs to the SmpB family.

The protein resides in the cytoplasm. In terms of biological role, required for rescue of stalled ribosomes mediated by trans-translation. Binds to transfer-messenger RNA (tmRNA), required for stable association of tmRNA with ribosomes. tmRNA and SmpB together mimic tRNA shape, replacing the anticodon stem-loop with SmpB. tmRNA is encoded by the ssrA gene; the 2 termini fold to resemble tRNA(Ala) and it encodes a 'tag peptide', a short internal open reading frame. During trans-translation Ala-aminoacylated tmRNA acts like a tRNA, entering the A-site of stalled ribosomes, displacing the stalled mRNA. The ribosome then switches to translate the ORF on the tmRNA; the nascent peptide is terminated with the 'tag peptide' encoded by the tmRNA and targeted for degradation. The ribosome is freed to recommence translation, which seems to be the essential function of trans-translation. This chain is SsrA-binding protein, found in Streptococcus agalactiae serotype Ia (strain ATCC 27591 / A909 / CDC SS700).